Here is a 217-residue protein sequence, read N- to C-terminus: Probable GTP-binding protein EngB (217 aa).

The EngB-type G domain occupies 27-201; sequence TGIEVAFAGR…RDKLDTWFSE (175 aa). Residues 35 to 42, 62 to 66, 80 to 83, 147 to 150, and 180 to 182 each bind GTP; these read GRSNAGKS, GRTQL, DLPG, TKAD, and FSS. Mg(2+) is bound by residues S42 and T64.

This sequence belongs to the TRAFAC class TrmE-Era-EngA-EngB-Septin-like GTPase superfamily. EngB GTPase family. Mg(2+) is required as a cofactor.

Its function is as follows. Necessary for normal cell division and for the maintenance of normal septation. The sequence is that of Probable GTP-binding protein EngB from Edwardsiella ictaluri (strain 93-146).